The following is a 240-amino-acid chain: DUP240 protein DFP1 (240 aa).

A disordered region spans residues Met1–Glu29. 2 helical membrane-spanning segments follow: residues Ile61–Phe81 and Val84–Ile104.

It belongs to the DUP/COS family.

Its subcellular location is the membrane. The sequence is that of DUP240 protein DFP1 from Saccharomyces cerevisiae (Baker's yeast).